A 176-amino-acid polypeptide reads, in one-letter code: Tubulin polymerization-promoting protein family member 3 (176 aa).

An N-acetylalanine modification is found at Ala2. A disordered region spans residues 132–152; it reads TGSHKERFDESGKGKGIAGRQ. Residues 134–144 show a composition bias toward basic and acidic residues; the sequence is SHKERFDESGK.

It belongs to the TPPP family.

It is found in the cytoplasm. It localises to the cytoskeleton. Regulator of microtubule dynamic that has microtubule bundling activity. Required for embryo implantation; possibly by regulating beta-catenin. Also required for decidualization via regulation of beta-catenin. The protein is Tubulin polymerization-promoting protein family member 3 of Mus musculus (Mouse).